The primary structure comprises 68 residues: Palustrin-1c (68 aa).

The signal sequence occupies residues Met1 to Cys22. A propeptide spanning residues Glu23 to Thr39 is cleaved from the precursor. An intrachain disulfide couples Cys62 to Cys68.

In terms of tissue distribution, expressed by the skin glands.

The protein resides in the secreted. In terms of biological role, antimicrobial activity against Gram-negative bacterium E.coli. Stimulates insulin release. The chain is Palustrin-1c from Lithobates palustris (Pickerel frog).